Reading from the N-terminus, the 594-residue chain is Glutamate decarboxylase 1 (594 aa).

The segment covering 1 to 13 (MASSTPSSSATSS) has biased composition (low complexity). Residues 1-23 (MASSTPSSSATSSNAGADPNTTN) are disordered. S78 is subject to Phosphoserine. 190 to 192 (QLS) is a 4-aminobutanoate binding site. Residue K405 is modified to N6-(pyridoxal phosphate)lysine. Residue R567 coordinates 4-aminobutanoate.

Belongs to the group II decarboxylase family. In terms of assembly, homodimer. Requires pyridoxal 5'-phosphate as cofactor.

The enzyme catalyses L-glutamate + H(+) = 4-aminobutanoate + CO2. In terms of biological role, catalyzes the synthesis of the inhibitory neurotransmitter gamma-aminobutyric acid (GABA) with pyridoxal 5'-phosphate as cofactor. The chain is Glutamate decarboxylase 1 (GAD1) from Bos taurus (Bovine).